We begin with the raw amino-acid sequence, 417 residues long: Tyrosine--tRNA ligase (417 aa).

L-tyrosine is bound at residue Y34. The short motif at 39 to 48 (PSGDSLHIGH) is the 'HIGH' region element. L-tyrosine contacts are provided by Y165 and Q169. The 'KMSKS' region motif lies at 227–231 (KFGKT). K230 is a binding site for ATP. An S4 RNA-binding domain is found at 349 to 415 (ANIVDWLVDT…GKKNYTLAKV (67 aa)).

This sequence belongs to the class-I aminoacyl-tRNA synthetase family. TyrS type 1 subfamily. As to quaternary structure, homodimer.

The protein localises to the cytoplasm. The enzyme catalyses tRNA(Tyr) + L-tyrosine + ATP = L-tyrosyl-tRNA(Tyr) + AMP + diphosphate + H(+). Catalyzes the attachment of tyrosine to tRNA(Tyr) in a two-step reaction: tyrosine is first activated by ATP to form Tyr-AMP and then transferred to the acceptor end of tRNA(Tyr). This Limosilactobacillus fermentum (strain NBRC 3956 / LMG 18251) (Lactobacillus fermentum) protein is Tyrosine--tRNA ligase.